A 323-amino-acid chain; its full sequence is Elongation factor P--(R)-beta-lysine ligase (323 aa).

Residue 74–76 coordinates substrate; sequence SPE. ATP-binding positions include 98 to 100 and Asn-107; that span reads RNE. Tyr-116 serves as a coordination point for substrate. 242-243 provides a ligand contact to ATP; it reads EL. Glu-249 is a substrate binding site. Gly-298 provides a ligand contact to ATP.

The protein belongs to the class-II aminoacyl-tRNA synthetase family. EpmA subfamily. Homodimer.

The enzyme catalyses D-beta-lysine + L-lysyl-[protein] + ATP = N(6)-((3R)-3,6-diaminohexanoyl)-L-lysyl-[protein] + AMP + diphosphate + H(+). In terms of biological role, with EpmB is involved in the beta-lysylation step of the post-translational modification of translation elongation factor P (EF-P). Catalyzes the ATP-dependent activation of (R)-beta-lysine produced by EpmB, forming a lysyl-adenylate, from which the beta-lysyl moiety is then transferred to the epsilon-amino group of a conserved specific lysine residue in EF-P. This chain is Elongation factor P--(R)-beta-lysine ligase, found in Photobacterium profundum (strain SS9).